Consider the following 180-residue polypeptide: Chromosome-anchoring protein RacA (180 aa).

Residues 5–25 constitute a DNA-binding region (H-T-H motif); that stretch reads TPFIAKKLGVSPKAVVRIAQQ. Positions 89-151 form a coiled coil; sequence SHDFEQLTAQ…LEATLKKEEP (63 aa).

Belongs to the RacA family.

The protein resides in the cytoplasm. In terms of biological role, required for the formation of axial filaments and for anchoring the origin regions at the cell poles in sporulating cells, thus ensuring proper chromosome segregation in the prespore. Binds in a dispersed manner throughout the chromosome but preferentially to sites clustered in the origin portion of the chromosome, causing condensation of the chromosome and its remodeling into an elongated, anchored structure. The protein is Chromosome-anchoring protein RacA of Bacillus cereus (strain ATCC 10987 / NRS 248).